Consider the following 249-residue polypeptide: Tryptophan synthase alpha chain (249 aa).

Active-site proton acceptor residues include glutamate 43 and aspartate 54.

It belongs to the TrpA family. As to quaternary structure, tetramer of two alpha and two beta chains.

It catalyses the reaction (1S,2R)-1-C-(indol-3-yl)glycerol 3-phosphate + L-serine = D-glyceraldehyde 3-phosphate + L-tryptophan + H2O. It functions in the pathway amino-acid biosynthesis; L-tryptophan biosynthesis; L-tryptophan from chorismate: step 5/5. Its function is as follows. The alpha subunit is responsible for the aldol cleavage of indoleglycerol phosphate to indole and glyceraldehyde 3-phosphate. The sequence is that of Tryptophan synthase alpha chain from Campylobacter jejuni subsp. doylei (strain ATCC BAA-1458 / RM4099 / 269.97).